Consider the following 212-residue polypeptide: MKQLFRQWYDLSEIKKELTTRNWFPATSGNISIKVSHEPLTFLITASGKDKTKTTPDDFLLVDHLGVPVLETELRPSAETILHTHIYNNTNAGCVLHVHTTDNNVITNLYSDAVTLQNQEIIKALDIWEEDATIHIPIIENHAHIPTLGENFRKHIQGDSGAVLIRNHGITVWGRDSFDAKKRLEAYEFLFQFHIKLLSIQGGVSNGANSYS.

Residues His-97 and His-99 each coordinate Zn(2+).

The protein belongs to the aldolase class II family. MtnB subfamily. As to quaternary structure, homotetramer. It depends on Zn(2+) as a cofactor.

It catalyses the reaction 5-(methylsulfanyl)-D-ribulose 1-phosphate = 5-methylsulfanyl-2,3-dioxopentyl phosphate + H2O. The protein operates within amino-acid biosynthesis; L-methionine biosynthesis via salvage pathway; L-methionine from S-methyl-5-thio-alpha-D-ribose 1-phosphate: step 2/6. Catalyzes the dehydration of methylthioribulose-1-phosphate (MTRu-1-P) into 2,3-diketo-5-methylthiopentyl-1-phosphate (DK-MTP-1-P). The polypeptide is Methylthioribulose-1-phosphate dehydratase (Bacillus cereus (strain AH187)).